The chain runs to 397 residues: Putative galactokinase (397 aa).

Ser78 serves as a coordination point for ATP. Residue Asp182 is the Proton acceptor of the active site.

It belongs to the GHMP kinase family. GalK subfamily.

Its subcellular location is the cytoplasm. The catalysed reaction is alpha-D-galactose + ATP = alpha-D-galactose 1-phosphate + ADP + H(+). It participates in carbohydrate metabolism; galactose metabolism. Its function is as follows. Catalyzes the transfer of the gamma-phosphate of ATP to D-galactose to form alpha-D-galactose-1-phosphate (Gal-1-P). This Treponema pallidum (strain Nichols) protein is Putative galactokinase (galK).